The sequence spans 477 residues: Probable malate:quinone oxidoreductase (477 aa).

This sequence belongs to the MQO family. Requires FAD as cofactor.

It carries out the reaction (S)-malate + a quinone = a quinol + oxaloacetate. It functions in the pathway carbohydrate metabolism; tricarboxylic acid cycle; oxaloacetate from (S)-malate (quinone route): step 1/1. This chain is Probable malate:quinone oxidoreductase, found in Synechococcus sp. (strain RCC307).